Here is a 427-residue protein sequence, read N- to C-terminus: Serine--tRNA ligase (427 aa).

231-233 (TAE) provides a ligand contact to L-serine. 262-264 (RSE) contacts ATP. Residue Glu285 coordinates L-serine. 349–352 (EISS) lines the ATP pocket. An L-serine-binding site is contributed by Ser385.

It belongs to the class-II aminoacyl-tRNA synthetase family. Type-1 seryl-tRNA synthetase subfamily. Homodimer. The tRNA molecule binds across the dimer.

It is found in the cytoplasm. It carries out the reaction tRNA(Ser) + L-serine + ATP = L-seryl-tRNA(Ser) + AMP + diphosphate + H(+). The catalysed reaction is tRNA(Sec) + L-serine + ATP = L-seryl-tRNA(Sec) + AMP + diphosphate + H(+). It participates in aminoacyl-tRNA biosynthesis; selenocysteinyl-tRNA(Sec) biosynthesis; L-seryl-tRNA(Sec) from L-serine and tRNA(Sec): step 1/1. Functionally, catalyzes the attachment of serine to tRNA(Ser). Is also able to aminoacylate tRNA(Sec) with serine, to form the misacylated tRNA L-seryl-tRNA(Sec), which will be further converted into selenocysteinyl-tRNA(Sec). The polypeptide is Serine--tRNA ligase (Rhizobium etli (strain CIAT 652)).